Here is a 427-residue protein sequence, read N- to C-terminus: MKLETKAQGLRGSLRIPGDKSISHRSIMFGSLAKGVTTVRDILRGEDVLSTMQVFRDLGVTIEDDGDVVRIHGVGFDGLKAPQNKLDMGNSGTSIRLISGVLAGQDFDVEMFGDDSLSKRPMDRVTIPLRQMGVEVSGQTDRDLPPLKMHGSKSLKPIYYELPVASAQVKSALIFAALQADGESVIIEKEKTRNHTEDMIQQFGGQLQVEGKEIRISGGQTFTAQEVVVPGDISSAAFWLVAGLVVPNSKIVLKNVGINETRTGIIDVIKNMGGKIKLSDIDQVAKSATITVETSELNGTEIGGDIIPRLIDELPIITLLATQAQGKTVIRDAEELKVKETDRIQVVADALNAMGADIVPTEDGMIITGKTPLHGAEVNTFGDHRIGMMTAIAALLVQDGEVDLQRAEAINTSYPSFFSDLEGLLHG.

3-phosphoshikimate-binding residues include lysine 20, serine 21, and arginine 25. Lysine 20 contributes to the phosphoenolpyruvate binding site. Phosphoenolpyruvate-binding residues include glycine 92 and arginine 120. The 3-phosphoshikimate site is built by serine 166, glutamine 168, aspartate 312, and lysine 339. Glutamine 168 is a binding site for phosphoenolpyruvate. The active-site Proton acceptor is aspartate 312. 2 residues coordinate phosphoenolpyruvate: arginine 343 and arginine 385.

This sequence belongs to the EPSP synthase family. In terms of assembly, monomer.

The protein localises to the cytoplasm. It carries out the reaction 3-phosphoshikimate + phosphoenolpyruvate = 5-O-(1-carboxyvinyl)-3-phosphoshikimate + phosphate. The protein operates within metabolic intermediate biosynthesis; chorismate biosynthesis; chorismate from D-erythrose 4-phosphate and phosphoenolpyruvate: step 6/7. Its function is as follows. Catalyzes the transfer of the enolpyruvyl moiety of phosphoenolpyruvate (PEP) to the 5-hydroxyl of shikimate-3-phosphate (S3P) to produce enolpyruvyl shikimate-3-phosphate and inorganic phosphate. This chain is 3-phosphoshikimate 1-carboxyvinyltransferase, found in Streptococcus thermophilus (strain ATCC BAA-491 / LMD-9).